The following is a 269-amino-acid chain: ParA family protein MG470 (269 aa).

This sequence belongs to the ParA family.

In Mycoplasma genitalium (strain ATCC 33530 / DSM 19775 / NCTC 10195 / G37) (Mycoplasmoides genitalium), this protein is ParA family protein MG470.